Here is a 124-residue protein sequence, read N- to C-terminus: Cytochrome b5-like protein (124 aa).

A helical transmembrane segment spans residues 5 to 22; that stretch reads YLLILIIIYVIKIICRYF. The Cytochrome b5 heme-binding domain maps to 49 to 124; that stretch reads NQINQVNQVN…ILSKYKITEK (76 aa). Heme-binding residues include H84 and H108.

It belongs to the cytochrome b5 family.

Its subcellular location is the membrane. Its function is as follows. Membrane bound hemoprotein which function as an electron carrier for several membrane bound oxygenases. This is Cytochrome b5-like protein from Acanthamoeba polyphaga (Amoeba).